The chain runs to 1160 residues: ATP-dependent helicase/deoxyribonuclease subunit B (1160 aa).

It belongs to the helicase family. AddB/RexB type 2 subfamily. Heterodimer of AddA and RexB. Mg(2+) serves as cofactor.

In terms of biological role, the heterodimer acts as both an ATP-dependent DNA helicase and an ATP-dependent, dual-direction single-stranded exonuclease. Recognizes the chi site generating a DNA molecule suitable for the initiation of homologous recombination. This subunit has 5' -&gt; 3' nuclease activity but not helicase activity. The sequence is that of ATP-dependent helicase/deoxyribonuclease subunit B from Lactobacillus helveticus (strain DPC 4571).